Consider the following 329-residue polypeptide: GDP-mannose transporter (329 aa).

Topologically, residues 1–11 are cytoplasmic; the sequence is MADKGSVAAKS. A helical membrane pass occupies residues 12–32; sequence LTNSAPLSIFSYCAASILMTV. At 33–40 the chain is on the lumenal side; it reads TNKYAVSG. Residues 41 to 61 traverse the membrane as a helical segment; that stretch reads VDFNFNFFLLAVQGIVCITLI. At 62 to 83 the chain is on the cytoplasmic side; it reads SSLKQLNVITFREFNKVEAKKW. Residues 84–104 traverse the membrane as a helical segment; that stretch reads FPIAVLLVVMIYTSSKALQYL. Residues 105–107 lie on the Lumenal side of the membrane; sequence SIP. A helical membrane pass occupies residues 108 to 128; that stretch reads IYTIFKNLTIILIAYGEVIWF. Over 129–131 the chain is Cytoplasmic; sequence GGR. The chain crosses the membrane as a helical span at residues 132–152; sequence VTNLALGSFVLMVLSSAVASY. Residues 153–163 are Lumenal-facing; it reads GDSNVDTGKLN. A helical transmembrane segment spans residues 164–184; it reads FNIGYFWMFTNCFSSAAFVLF. At 185-196 the chain is on the cytoplasmic side; it reads MRKRIKLTNFKD. The chain crosses the membrane as a helical span at residues 197–217; the sequence is FDTMYYNNLLSIPILLFASLT. At 218-237 the chain is on the lumenal side; that stretch reads TEDWSAKNIAQNFPEDTKYA. Residues 238 to 258 form a helical membrane-spanning segment; the sequence is VIASMIISGMSAVGISYTSAW. Residues 259–266 are Cytoplasmic-facing; it reads CVRVTSST. A helical transmembrane segment spans residues 267-287; it reads TYSMVGALNKLPIALSGLLFF. The Lumenal segment spans residues 288 to 290; the sequence is KAP. Residues 291 to 311 form a helical membrane-spanning segment; that stretch reads INFYSISSIFIGFAAGLVYAI. The Cytoplasmic segment spans residues 312-329; sequence AKQKQKKEDELQLPTDKS.

This sequence belongs to the TPT transporter family. SLC35D subfamily. As to quaternary structure, homooligomer.

The protein localises to the golgi apparatus membrane. It is found in the cytoplasmic vesicle membrane. It localises to the endoplasmic reticulum membrane. Its function is as follows. Involved in the import of GDP-mannose from the cytoplasm into the Golgi lumen. This is GDP-mannose transporter (VIG4) from Komagataella pastoris (Yeast).